The primary structure comprises 57 residues: Large ribosomal subunit protein bL32 (57 aa).

Residues 1-19 (MAVPKRRKSRSNTRSRRSQ) are compositionally biased toward basic residues. A disordered region spans residues 1–22 (MAVPKRRKSRSNTRSRRSQWKA).

The protein belongs to the bacterial ribosomal protein bL32 family.

This Mycobacterium tuberculosis (strain ATCC 25177 / H37Ra) protein is Large ribosomal subunit protein bL32.